Reading from the N-terminus, the 540-residue chain is uncharacterized protein (540 aa).

The N-terminal 58 residues, 1 to 58 (MAVSAFRGTRLPLFHHSQFPVARTVSGTSKKMIGARNFKGFVLTAQYSQTQDLFTSRL), are a transit peptide targeting the chloroplast. Positions 195-533 (YVDPTPIASA…ISIASNKRTN (339 aa)) constitute a Protein kinase domain. ATP is bound by residues 201–209 (IASASIAQV) and Lys-224. Residue Asp-362 is the Proton acceptor of the active site.

It belongs to the protein kinase superfamily. ADCK protein kinase family.

The protein resides in the plastid. Its subcellular location is the chloroplast. It is found in the plastoglobule. This is an uncharacterized protein from Arabidopsis thaliana (Mouse-ear cress).